The sequence spans 951 residues: Protein inturned (951 aa).

Disordered regions lie at residues 1–32, 189–208, and 687–765; these read MEHS…FSSS, SSRN…NQRL, and TPKR…GGSG. One can recognise a PDZ domain in the interval 187 to 269; it reads HQSSRNSKRS…PMQLKLTFET (83 aa). A compositionally biased stretch (low complexity) spans 715-726; it reads PTRSSGGSDSGT. Residues 743-752 show a composition bias toward basic and acidic residues; it reads MARKFGRRES. Over residues 754–765 the composition is skewed to gly residues; sequence GSGGSDGSGGSG.

The protein belongs to the inturned family. As to quaternary structure, interacts with fuz and wdpcp; fuz, intu and wdpcp probably form the core CPLANE (ciliogenesis and planar polarity effectors) complex. As to expression, expressed in the neural plate during neural tube closure with subsequent strong expression in the ventral neural tube and in facial mesenchyme.

It is found in the cell surface. The protein localises to the cell membrane. Its subcellular location is the cytoplasm. The protein resides in the cytoskeleton. It localises to the cilium basal body. In terms of biological role, plays a role in the definition of cell polarity via the planar cell polarity (PCP) cascade. Required for ciliogenesis by controlling the organization of the apical actin cytoskeleton and the positioning of the basal bodies at the apical cell surface, which in turn is essential for the normal orientation of elongating ciliary microtubules. Proposed to function as core component of a functional module called CPLANE (ciliogenesis and planar polarity effectors) involved in recruitment of peripheral IFT-A proteins to basal bodies. Controls the localization of both rhoa and disheveled in multi-ciliated cells. Has an indirect effect on hedgehog signaling. This Xenopus laevis (African clawed frog) protein is Protein inturned.